Here is a 643-residue protein sequence, read N- to C-terminus: Replication protein E1 (643 aa).

A Nuclear localization signal motif is present at residues 81–83 (KRK). A phosphoserine; by host mark is found at S87, S91, and S105. Positions 104 to 113 (ISPRLDAITL) match the Nuclear export signal motif. Residues 130 to 166 (LTDSGYGNTEVEAETQVERNGEPEDCGGGGQGRDTEG) form a disordered region. Residues 181–347 (QQHTGTTRVL…QTIVEHGLAD (167 aa)) are DNA-binding region. The SF3 helicase domain occupies 446–596 (IEFIPFLTKL…FPFDRNGNAL (151 aa)). Residue 472 to 479 (GPPDTGKS) participates in ATP binding. Residue K553 forms a Glycyl lysine isopeptide (Lys-Gly) (interchain with G-Cter in SUMO) linkage.

It belongs to the papillomaviridae E1 protein family. As to quaternary structure, can form hexamers. Interacts with E2 protein; this interaction increases E1 DNA binding specificity. Interacts with host DNA polymerase subunit POLA2. Interacts with host single stranded DNA-binding protein RPA1. Interacts with host TOP1; this interaction stimulates the enzymatic activity of TOP1. In terms of processing, phosphorylated. Sumoylated.

It is found in the host nucleus. It carries out the reaction Couples ATP hydrolysis with the unwinding of duplex DNA by translocating in the 3'-5' direction.. The enzyme catalyses ATP + H2O = ADP + phosphate + H(+). Its function is as follows. ATP-dependent DNA 3'-5' helicase required for initiation of viral DNA replication. It forms a complex with the viral E2 protein. The E1-E2 complex binds to the replication origin which contains binding sites for both proteins. During the initial step, a dimer of E1 interacts with a dimer of protein E2 leading to a complex that binds the viral origin of replication with high specificity. Then, a second dimer of E1 displaces the E2 dimer in an ATP-dependent manner to form the E1 tetramer. Following this, two E1 monomers are added to each half of the site, which results in the formation of two E1 trimers on the viral ori. Subsequently, two hexamers will be created. The double hexamer acts as a bi-directional helicase machinery and unwinds the viral DNA and then recruits the host DNA polymerase to start replication. The polypeptide is Replication protein E1 (Homo sapiens (Human)).